The primary structure comprises 598 residues: Autophagy-related protein 22-1 (598 aa).

The disordered stretch occupies residues 1–20; that stretch reads MEDGGAGLRAPRYPAEDTSP. The helical transmembrane segment at 28-48 threads the bilayer; sequence GFFCYGLAAEVFAVCAVGSFL. Asn-74 and Asn-80 each carry an N-linked (GlcNAc...) asparagine glycan. The next 3 helical transmembrane spans lie at 111–131, 159–179, and 182–202; these read SFAM…LVSV, FLLV…ICVV, and GCSF…HPVV. The tract at residues 207–238 is disordered; the sequence is DHPTASSSIPLQPISPQRSSRKSEESLHQVNR. Residues 212-224 show a composition bias toward low complexity; it reads SSSIPLQPISPQR. Residues 227–238 show a composition bias toward basic and acidic residues; it reads RKSEESLHQVNR. Residues 263 to 283 form a helical membrane-spanning segment; that stretch reads VGIGYMAAVSVQVICILILYI. A glycan (N-linked (GlcNAc...) asparagine) is linked at Asn-285. The next 7 membrane-spanning stretches (helical) occupy residues 297 to 317, 363 to 383, 400 to 420, 431 to 451, 465 to 485, 489 to 509, and 534 to 554; these read TVLF…VMWL, VLLF…ISAT, ALLS…WPII, IIVC…LGFL, WYEI…LSSY, FYGL…FAIT, and AFGF…MVDV. The disordered stretch occupies residues 575-598; the sequence is HEDFESFEGSSDGHEAEGLMRDHD. Residues 585 to 598 are compositionally biased toward basic and acidic residues; sequence SDGHEAEGLMRDHD.

Belongs to the ATG22 family.

Its subcellular location is the vacuole membrane. Vacuolar effluxer which mediate the efflux of amino acids resulting from autophagic degradation. The release of autophagic amino acids allows the maintenance of protein synthesis and viability during nitrogen starvation. This chain is Autophagy-related protein 22-1 (atg22-1), found in Sclerotinia sclerotiorum (strain ATCC 18683 / 1980 / Ss-1) (White mold).